We begin with the raw amino-acid sequence, 180 residues long: Ribosome maturation factor RimM (180 aa).

The 73-residue stretch at 97-169 folds into the PRC barrel domain; the sequence is PGELSWDFFV…IITVDLPEGL (73 aa).

This sequence belongs to the RimM family. As to quaternary structure, binds ribosomal protein uS19.

The protein resides in the cytoplasm. In terms of biological role, an accessory protein needed during the final step in the assembly of 30S ribosomal subunit, possibly for assembly of the head region. Essential for efficient processing of 16S rRNA. May be needed both before and after RbfA during the maturation of 16S rRNA. It has affinity for free ribosomal 30S subunits but not for 70S ribosomes. This chain is Ribosome maturation factor RimM, found in Bacteroides fragilis (strain YCH46).